The chain runs to 370 residues: MAFAKLSAFVLALGATVALGESPTHRCLNKRVTCATGQTTANEACCALFPILDDIQTNLFDGAQCGEEVHESLRLTFHDAIAFSPALTNAGQFGGGGADGSMIIFSDTEPNFHANLGIDEIVEAQKPFIARHNISAADFIQFAGAIGVSNCAGAPRLNFFLGRPDATQIPPDGLVPEPFDDVTKILSRMGDAGFSTVEVVWLLASHTIAAADHVDPSIPGTPFDSTPSTFDSQFFLETMLQGTAFPGTPGNQGEVESPLAGEMRLQSDFLLARDSRSACEWQSMVNNMPKIQNRFTQVMKKLSLLGHNQADLIDCSDVIPVPKTLTKAATFPAGKSQADVEIVCNAAATPFPALASDPGPVTAVPPVPPS.

The signal sequence occupies residues 1 to 20; sequence MAFAKLSAFVLALGATVALG. The propeptide occupies 21–31; that stretch reads ESPTHRCLNKR. 4 disulfide bridges follow: C34–C46, C45–C315, C65–C151, and C279–C344. Mn(2+) is bound by residues E67 and E71. Residue H78 is the Proton acceptor of the active site. Positions 79, 97, 99, and 101 each coordinate Ca(2+). N-linked (GlcNAc...) asparagine glycosylation is present at N133. Catalysis depends on W201, which acts as the Tryptophan radical intermediate. H206 provides a ligand contact to heme b. T207 is a Ca(2+) binding site. Position 210–214 (210–214) interacts with heme b; sequence AADHV. Position 212 (D212) interacts with Mn(2+). Residues D224, T226, T229, and D231 each coordinate Ca(2+).

The protein belongs to the peroxidase family. Ligninase subfamily. The cofactor is heme b. It depends on Ca(2+) as a cofactor.

It localises to the secreted. It carries out the reaction 1-(4-hydroxy-3-methoxyphenyl)-2-(2-methoxyphenoxy)propane-1,3-diol + H2O2 = guaiacol + vanillin + glycolaldehyde + H2O. It catalyses the reaction 2 Mn(2+) + H2O2 + 2 H(+) = 2 Mn(3+) + 2 H2O. Functionally, a versatile ligninolytic peroxidase that combines the substrate specificity characteristics of the two other ligninolytic peroxidases, manganese peroxidase and lignin peroxidase. This chain is Versatile peroxidase VPS1 (vps1), found in Pleurotus eryngii (Boletus of the steppes).